The following is a 347-amino-acid chain: Fructose-1,6-bisphosphatase class 1 (347 aa).

Mg(2+)-binding residues include glutamate 107, aspartate 128, leucine 130, and aspartate 131. Substrate-binding positions include 131 to 134, asparagine 224, tyrosine 257, and lysine 286; that span reads DGSS. Residue glutamate 292 participates in Mg(2+) binding.

It belongs to the FBPase class 1 family. In terms of assembly, homotetramer. Mg(2+) is required as a cofactor.

Its subcellular location is the cytoplasm. It carries out the reaction beta-D-fructose 1,6-bisphosphate + H2O = beta-D-fructose 6-phosphate + phosphate. Its pathway is carbohydrate biosynthesis; gluconeogenesis. In Sorangium cellulosum (strain So ce56) (Polyangium cellulosum (strain So ce56)), this protein is Fructose-1,6-bisphosphatase class 1.